Here is a 101-residue protein sequence, read N- to C-terminus: Chaperone modulatory protein CbpM (101 aa).

The protein belongs to the CbpM family.

Functionally, interacts with CbpA and inhibits both the DnaJ-like co-chaperone activity and the DNA binding activity of CbpA. Together with CbpA, modulates the activity of the DnaK chaperone system. Does not inhibit the co-chaperone activity of DnaJ. This is Chaperone modulatory protein CbpM from Escherichia coli (strain K12 / MC4100 / BW2952).